Consider the following 218-residue polypeptide: NAD(P)H-quinone oxidoreductase subunit I (218 aa).

4Fe-4S ferredoxin-type domains are found at residues 55–84 (GRIH…VDWV) and 95–124 (RNYS…MTEE). [4Fe-4S] cluster is bound by residues C64, C67, C70, C74, C104, C107, C110, and C114. Residues 168-218 (EVQPHGVDPSRPRAGQRPDQVLSSLKQNAGGSAGNEGESATSTNTSKGSAE) are disordered. The segment covering 208-218 (TSTNTSKGSAE) has biased composition (polar residues).

Belongs to the complex I 23 kDa subunit family. As to quaternary structure, NDH-1 is composed of at least 11 different subunits. [4Fe-4S] cluster is required as a cofactor.

The protein resides in the cellular thylakoid membrane. It carries out the reaction a plastoquinone + NADH + (n+1) H(+)(in) = a plastoquinol + NAD(+) + n H(+)(out). It catalyses the reaction a plastoquinone + NADPH + (n+1) H(+)(in) = a plastoquinol + NADP(+) + n H(+)(out). In terms of biological role, NDH-1 shuttles electrons from an unknown electron donor, via FMN and iron-sulfur (Fe-S) centers, to quinones in the respiratory and/or the photosynthetic chain. The immediate electron acceptor for the enzyme in this species is believed to be plastoquinone. Couples the redox reaction to proton translocation, and thus conserves the redox energy in a proton gradient. In Synechococcus sp. (strain WH7803), this protein is NAD(P)H-quinone oxidoreductase subunit I.